Reading from the N-terminus, the 934-residue chain is Bifunctional uridylyltransferase/uridylyl-removing enzyme (934 aa).

The uridylyltransferase stretch occupies residues 1 to 379 (MSAHDLKLEE…TFSRRKRKLS (379 aa)). The segment at 380–736 (DDGAFISENH…AKPHAFEAVT (357 aa)) is uridylyl-removing. The 118-residue stretch at 496 to 613 (VDEHLLRCIA…IDFADTVQTM (118 aa)) folds into the HD domain. 2 consecutive ACT domains span residues 737–818 (EITV…DMLA) and 848–931 (VIEV…RSPQ).

This sequence belongs to the GlnD family. The cofactor is Mg(2+).

The catalysed reaction is [protein-PII]-L-tyrosine + UTP = [protein-PII]-uridylyl-L-tyrosine + diphosphate. It carries out the reaction [protein-PII]-uridylyl-L-tyrosine + H2O = [protein-PII]-L-tyrosine + UMP + H(+). With respect to regulation, uridylyltransferase (UTase) activity is inhibited by glutamine, while glutamine activates uridylyl-removing (UR) activity. Its function is as follows. Modifies, by uridylylation and deuridylylation, the PII regulatory proteins (GlnB and homologs), in response to the nitrogen status of the cell that GlnD senses through the glutamine level. Under low glutamine levels, catalyzes the conversion of the PII proteins and UTP to PII-UMP and PPi, while under higher glutamine levels, GlnD hydrolyzes PII-UMP to PII and UMP (deuridylylation). Thus, controls uridylylation state and activity of the PII proteins, and plays an important role in the regulation of nitrogen assimilation and metabolism. This is Bifunctional uridylyltransferase/uridylyl-removing enzyme from Brucella melitensis biotype 2 (strain ATCC 23457).